The following is a 117-amino-acid chain: Ig heavy chain V region 186-1 (117 aa).

The signal sequence occupies residues 1 to 19 (MGWSCIMLFLAATATGVHS). The interval 20–49 (QVQLQQPGAELVKPGASVKLSCKASGYTFT) is framework-1. Cysteine 41 and cysteine 115 are oxidised to a cystine. The interval 50–54 (SYWMH) is complementarity-determining-1. Residues 55–68 (WVKQRPGRGLEWIG) are framework-2. The complementarity-determining-2 stretch occupies residues 69–85 (RIDPNSGGTKYNEKFKS). The tract at residues 86–117 (KATLTVDTSSSTAYMQLHSLTSEDSAVYYCAR) is framework-3.

This is Ig heavy chain V region 186-1 from Mus musculus (Mouse).